Here is a 186-residue protein sequence, read N- to C-terminus: Ribosome-recycling factor (186 aa).

A disordered region spans residues 135–156; sequence DANDEVKKLQKDKAVSEDEGKK.

This sequence belongs to the RRF family.

The protein resides in the cytoplasm. In terms of biological role, responsible for the release of ribosomes from messenger RNA at the termination of protein biosynthesis. May increase the efficiency of translation by recycling ribosomes from one round of translation to another. This is Ribosome-recycling factor from Bdellovibrio bacteriovorus (strain ATCC 15356 / DSM 50701 / NCIMB 9529 / HD100).